Consider the following 266-residue polypeptide: tRNA pseudouridine synthase A (266 aa).

Asp-51 acts as the Nucleophile in catalysis. A substrate-binding site is contributed by Tyr-106.

This sequence belongs to the tRNA pseudouridine synthase TruA family.

The enzyme catalyses uridine(38/39/40) in tRNA = pseudouridine(38/39/40) in tRNA. Its function is as follows. Formation of pseudouridine at positions 38, 39 and 40 in the anticodon stem and loop of transfer RNAs. This chain is tRNA pseudouridine synthase A, found in Pyrococcus furiosus (strain ATCC 43587 / DSM 3638 / JCM 8422 / Vc1).